A 243-amino-acid polypeptide reads, in one-letter code: Protein IN2-1 (243 aa).

A disordered region spans residues 1 to 26 (MAAAAGPSSSVKESLPPALGSTSQPP). The GST N-terminal domain occupies 31–112 (GTTRLYICYF…YIDSNFDGPA (82 aa)). Glutathione-binding positions include K70, V84, and 96-97 (ES). The GST C-terminal domain maps to 109 to 240 (DGPALLPEDA…FLLDLAKSHL (132 aa)).

Belongs to the GST superfamily. HSP26 family. Leaves and roots. It is more strongly induced in the leaves relative to the roots.

The polypeptide is Protein IN2-1 (IN2-1) (Zea mays (Maize)).